A 451-amino-acid polypeptide reads, in one-letter code: Exodeoxyribonuclease 7 large subunit (451 aa).

Belongs to the XseA family. As to quaternary structure, heterooligomer composed of large and small subunits.

The protein resides in the cytoplasm. The catalysed reaction is Exonucleolytic cleavage in either 5'- to 3'- or 3'- to 5'-direction to yield nucleoside 5'-phosphates.. Bidirectionally degrades single-stranded DNA into large acid-insoluble oligonucleotides, which are then degraded further into small acid-soluble oligonucleotides. The sequence is that of Exodeoxyribonuclease 7 large subunit from Thiobacillus denitrificans (strain ATCC 25259 / T1).